A 340-amino-acid polypeptide reads, in one-letter code: Putative 2-hydroxyacid dehydrogenase C1773.17c (340 aa).

NAD(+) is bound by residues 169 to 170, 249 to 251, and Asp-275; these read AI and TAR. Residue Arg-251 is part of the active site. The active site involves Glu-280. The Proton donor role is filled by His-298. 298-301 lines the NAD(+) pocket; that stretch reads HCGV.

It belongs to the D-isomer specific 2-hydroxyacid dehydrogenase family.

The polypeptide is Putative 2-hydroxyacid dehydrogenase C1773.17c (Schizosaccharomyces pombe (strain 972 / ATCC 24843) (Fission yeast)).